The following is a 442-amino-acid chain: Protein PRRC1-B (442 aa).

The segment at 1 to 24 (MMEESGIETTPPSTPPPSTIGTSV) is disordered.

The protein belongs to the PRRC1 family.

It localises to the golgi apparatus. The chain is Protein PRRC1-B (prrc1-b) from Xenopus laevis (African clawed frog).